Here is a 904-residue protein sequence, read N- to C-terminus: uncharacterized protein (904 aa).

2 disordered regions span residues 247-275 (KIGKSRTTEDVSMPPLHRGVGTPANSLEF) and 328-360 (GDSQTPGLHYPPTAGAQTLSPTSHPSSANHHFS). A compositionally biased stretch (polar residues) spans 342-360 (GAQTLSPTSHPSSANHHFS). The helical transmembrane segment at 778-798 (VVQGMILMFAGGKLIFGGRVL) threads the bilayer.

It localises to the membrane. This is an uncharacterized protein from Homo sapiens (Human).